We begin with the raw amino-acid sequence, 326 residues long: tRNA-modifying protein YgfZ (326 aa).

Residues Trp27 and Trp189 each contribute to the folate site.

It belongs to the tRNA-modifying YgfZ family.

The protein resides in the cytoplasm. Folate-binding protein involved in regulating the level of ATP-DnaA and in the modification of some tRNAs. It is probably a key factor in regulatory networks that act via tRNA modification, such as initiation of chromosomal replication. This Escherichia coli O127:H6 (strain E2348/69 / EPEC) protein is tRNA-modifying protein YgfZ.